The sequence spans 141 residues: Small ribosomal subunit protein bS6 (141 aa).

Positions 97-141 are disordered; sequence TGQSEMLKAEENRSERRERRDRPEHSDSADGDDGDNSDVSDNADE. Positions 103 to 124 are enriched in basic and acidic residues; the sequence is LKAEENRSERRERRDRPEHSDS. A compositionally biased stretch (acidic residues) spans 125–141; the sequence is ADGDDGDNSDVSDNADE.

It belongs to the bacterial ribosomal protein bS6 family.

Its function is as follows. Binds together with bS18 to 16S ribosomal RNA. This Pseudomonas syringae pv. syringae (strain B728a) protein is Small ribosomal subunit protein bS6.